The sequence spans 319 residues: Adenosine receptor A3 (319 aa).

At 1–15 (MEADNTTETDWLNIT) the chain is on the extracellular side. N-linked (GlcNAc...) asparagine glycosylation is found at Asn-5 and Asn-13. The chain crosses the membrane as a helical span at residues 16–38 (YITMEAAIGLCAVVGNMLVIWVV). Over 39 to 49 (KLNPTLRTTTV) the chain is Cytoplasmic. A helical transmembrane segment spans residues 50 to 73 (YFIVSLALADIAVGVLVIPLAIAV). The Extracellular segment spans residues 74–85 (SLQVKMHFYACL). Residues Cys-84 and Cys-167 are joined by a disulfide bond. A helical membrane pass occupies residues 86–107 (FMSCVLLIFTHASIMSLLAIAV). The Cytoplasmic segment spans residues 108–127 (HRYLRVKLTVRYRTVTTQRR). Residues 128-149 (IWLFLGLCWLVSFLVGLTPMFG) traverse the membrane as a helical segment. The Extracellular segment spans residues 150-178 (WNRKATLASSQNSSTLLCHFRSVVSLDYM). Asn-161 carries N-linked (GlcNAc...) asparagine glycosylation. The chain crosses the membrane as a helical span at residues 179–199 (VFFSFITWILVPLVVMCIIYL). At 200 to 232 (DIFYIIRNKLSQNLTGFRETRAFYGREFKTAKS) the chain is on the cytoplasmic side. Residues 233 to 256 (LFLVLFLFALCWLPLSIINFVSYF) traverse the membrane as a helical segment. The Extracellular portion of the chain corresponds to 257–262 (DVKIPD). The chain crosses the membrane as a helical span at residues 263–285 (VAMCLGILLSHANSMMNPIVYAC). Residues 286–319 (KIKKFKETYFLILRAVRLCQTSDSLDSNMEQTTE) are Cytoplasmic-facing. A lipid anchor (S-palmitoyl cysteine) is attached at Cys-304.

This sequence belongs to the G-protein coupled receptor 1 family. Phosphorylation on Thr-317 and Thr-318 may be crucial for rapid desensitization. Phosphorylation on Thr-317 may be necessary for phosphorylation on Thr-318 to occur.

Its subcellular location is the cell membrane. In terms of biological role, receptor for adenosine. The activity of this receptor is mediated by G proteins which inhibits adenylyl cyclase. The protein is Adenosine receptor A3 (Adora3) of Mus musculus (Mouse).